The chain runs to 332 residues: Ribosomal RNA small subunit methyltransferase C (332 aa).

Belongs to the methyltransferase superfamily. RsmC family. As to quaternary structure, monomer.

Its subcellular location is the cytoplasm. It carries out the reaction guanosine(1207) in 16S rRNA + S-adenosyl-L-methionine = N(2)-methylguanosine(1207) in 16S rRNA + S-adenosyl-L-homocysteine + H(+). In terms of biological role, specifically methylates the guanine in position 1207 of 16S rRNA in the 30S particle. This chain is Ribosomal RNA small subunit methyltransferase C, found in Pseudomonas paraeruginosa (strain DSM 24068 / PA7) (Pseudomonas aeruginosa (strain PA7)).